The primary structure comprises 307 residues: MKISLVVPVFNEEEAIPVFYKTVREFQELKPYEVEIVFINDGSKDATESIINALAVSDPLVVPLSFTRNFGKEPALFAGLDHASGDAVIPIDVDLQDPIEVIPHLIEKWQAGADMVLAKRSDRSTDGRLKRKTAEWFYKLHNKISTPKIEENVGDFRLMSREVVENIKLLPERNLFMKGILSWVGGQTDVVEYVRAERVAGISKFNGWKLWNLALEGITSFSTFPLRVWTYIGLFVASISFLYGAWMIIDTLVFGNPVRGYPSLLVSILFLGGVQLIGIGVLGEYIGRIYIESKHRPKYIIKNEKQK.

Helical transmembrane passes span 229–249 and 263–283; these read WTYI…WMII and SLLV…GVLG.

The protein belongs to the glycosyltransferase 2 family. GtrB subfamily.

Its subcellular location is the host membrane. Its function is as follows. Involved in O antigen modification. Catalyzes the transfer of the glucose residue from UDP-glucose to a lipid carrier. This chain is Bactoprenol glucosyl transferase (gtrB), found in Shigella phage SfV (Shigella flexneri bacteriophage V).